Reading from the N-terminus, the 339-residue chain is MKVREITEELEYKLLSPYAAKSRESRGRAREEEKCDIRTDFQRDRDRIIHSKAFRRLSHKTQVFISPEGDHYRTRLTHTLEVAQIARTIARALRLNEDLTEAIALGHDLGHTPFGHSGEEVLNKLLKGGFRHSEQSIRVVEVLENDGKGLNLTWEVKDGILNHSTGGKPSTLEGQVVQISDKIAYINHDIDDAIRGRVLKPEDLPKDLIAILGDKHGKRIDTMVRDVIYNSMGKPEVSMSKEIYEATYQLRAFLFEKVYIGSKAKRDEEKAKRVVEQLFYYFYDNVDKMPKEFVRLAEIYGRERAVADYIAGMTDKYALLKYKEIFLPSPWFEQNIFDL.

The HD domain maps to 75-186 (RLTHTLEVAQ…VQISDKIAYI (112 aa)).

The protein belongs to the dGTPase family. Type 2 subfamily.

This chain is Deoxyguanosinetriphosphate triphosphohydrolase-like protein, found in Caldanaerobacter subterraneus subsp. tengcongensis (strain DSM 15242 / JCM 11007 / NBRC 100824 / MB4) (Thermoanaerobacter tengcongensis).